An 822-amino-acid polypeptide reads, in one-letter code: Molybdenum cofactor sulfurase (822 aa).

N6-(pyridoxal phosphate)lysine is present on Lys-245. Cys-412 is a catalytic residue. The 157-residue stretch at 658-814 (LRLIRQSSND…LKTYSPIKAI (157 aa)) folds into the MOSC domain.

The protein belongs to the class-V pyridoxal-phosphate-dependent aminotransferase family. MOCOS subfamily. It depends on pyridoxal 5'-phosphate as a cofactor.

The catalysed reaction is Mo-molybdopterin + L-cysteine + AH2 = thio-Mo-molybdopterin + L-alanine + A + H2O. Its pathway is cofactor biosynthesis; molybdopterin biosynthesis. Sulfurates the molybdenum cofactor. Sulfation of molybdenum is essential for xanthine dehydrogenase (XDH) and aldehyde oxidase (ADO) enzymes in which molybdenum cofactor is liganded by 1 oxygen and 1 sulfur atom in active form. The chain is Molybdenum cofactor sulfurase from Bombyx mori (Silk moth).